The primary structure comprises 184 residues: Oligoribonuclease (184 aa).

The Exonuclease domain occupies 8-169; that stretch reads LIWIDLEMTG…EDIHESIIEL (162 aa). Y129 is an active-site residue.

The protein belongs to the oligoribonuclease family.

The protein localises to the cytoplasm. In terms of biological role, 3'-to-5' exoribonuclease specific for small oligoribonucleotides. The sequence is that of Oligoribonuclease from Buchnera aphidicola subsp. Schizaphis graminum (strain Sg).